The primary structure comprises 128 residues: Calcitonin gene-related peptide 1 (128 aa).

Positions 1–25 are cleaved as a signal peptide; the sequence is MGFLKFSPFLVVSILLLYQACGLQA. The propeptide occupies 26 to 80; the sequence is VPLRSTLESSPGMAATLSEEEARLLLAALVQNYMQMKVRELEQEQEAEGSSVTAQ. Cysteine 84 and cysteine 89 are oxidised to a cystine. The residue at position 119 (phenylalanine 119) is a Phenylalanine amide. A propeptide spanning residues 125–128 is cleaved from the precursor; it reads DLQA.

This sequence belongs to the calcitonin family.

It localises to the secreted. Functionally, CGRP1/CALCA is a peptide hormone that induces vasodilation mediated by the CALCRL-RAMP1 receptor complex. Dilates a variety of vessels including the coronary, cerebral and systemic vasculature. Its abundance in the CNS also points toward a neurotransmitter or neuromodulator role. It also elevates platelet cAMP. CGRP1 can also bind and activate CALCR-RAMP1 (AMYR1) receptor complex. This Rattus norvegicus (Rat) protein is Calcitonin gene-related peptide 1.